We begin with the raw amino-acid sequence, 1180 residues long: DNA-directed RNA polymerase subunit beta' (1180 aa).

4 residues coordinate Zn(2+): C60, C62, C75, and C78. The Mg(2+) site is built by D449, D451, and D453. Zn(2+) contacts are provided by C792, C872, C879, and C882.

This sequence belongs to the RNA polymerase beta' chain family. The RNAP catalytic core consists of 2 alpha, 1 beta, 1 beta' and 1 omega subunit. When a sigma factor is associated with the core the holoenzyme is formed, which can initiate transcription. It depends on Mg(2+) as a cofactor. Zn(2+) serves as cofactor.

The catalysed reaction is RNA(n) + a ribonucleoside 5'-triphosphate = RNA(n+1) + diphosphate. Functionally, DNA-dependent RNA polymerase catalyzes the transcription of DNA into RNA using the four ribonucleoside triphosphates as substrates. This is DNA-directed RNA polymerase subunit beta' from Heliobacterium modesticaldum (strain ATCC 51547 / Ice1).